The sequence spans 146 residues: Putative phosphotransferase enzyme IIA component YadI (146 aa).

In terms of domain architecture, PTS EIIA type-4 spans 1-124 (MLGWVITCHD…RIVELGAPEV (124 aa)). Catalysis depends on His-9, which acts as the Tele-phosphohistidine intermediate.

It is found in the cytoplasm. Functionally, the phosphoenolpyruvate-dependent sugar phosphotransferase system (sugar PTS), a major carbohydrate active -transport system, catalyzes the phosphorylation of incoming sugar substrates concomitantly with their translocation across the cell membrane. The chain is Putative phosphotransferase enzyme IIA component YadI (yadI) from Escherichia coli (strain K12).